The following is a 29-amino-acid chain: Kappa-theraphotoxin-Ps1a (29 aa).

Intrachain disulfides connect C2/C16, C9/C21, and C15/C25. Residue I29 is modified to Isoleucine amide.

Belongs to the neurotoxin 30 (phrixotoxin) family. As to expression, expressed by the venom gland.

Its subcellular location is the secreted. Functionally, potent and specific blocker of Kv4.2/KCND2 (IC(50)=5 nM) and Kv4.3/KCND3 (IC(50)=28 nM) potassium channels. Acts by altering the gating properties of these channels. Also shows moderate inhibition on human voltage-gated sodium channel Nav1.7/SCN9A activation (IC(50)=423 nM). In Paraphysa scrofa (Chilean copper tarantula), this protein is Kappa-theraphotoxin-Ps1a.